Consider the following 204-residue polypeptide: Large ribosomal subunit protein eL15 (204 aa).

This sequence belongs to the eukaryotic ribosomal protein eL15 family. As to quaternary structure, component of the large ribosomal subunit.

The protein localises to the cytoplasm. Functionally, component of the large ribosomal subunit. The ribosome is a large ribonucleoprotein complex responsible for the synthesis of proteins in the cell. The chain is Large ribosomal subunit protein eL15 (rpl15) from Hypophthalmichthys nobilis (Bighead carp).